The sequence spans 138 residues: UPF0201 protein TK1335 (138 aa).

Belongs to the UPF0201 family.

The sequence is that of UPF0201 protein TK1335 from Thermococcus kodakarensis (strain ATCC BAA-918 / JCM 12380 / KOD1) (Pyrococcus kodakaraensis (strain KOD1)).